The following is a 337-amino-acid chain: Cytoskeleton protein RodZ (337 aa).

Residues 1-111 lie on the Cytoplasmic side of the membrane; it reads MNTEATHDQN…LGKRRKKRDG (111 aa). In terms of domain architecture, HTH cro/C1-type spans 19–71; sequence LRNAREQLGLSQQAVAERLCLKVSTVRDIEEDKAPADLASTFLRGYIRSYARL. A DNA-binding region (H-T-H motif) is located at residues 30–49; that stretch reads QQAVAERLCLKVSTVRDIEE. Residues 112-132 form a helical; Signal-anchor for type II membrane protein membrane-spanning segment; the sequence is WLMTFTWLVLFVVIGLSGAWW. Over 133-337 the chain is Periplasmic; sequence WQDHKAQQEE…TLNAEQSPAQ (205 aa). Polar residues predominate over residues 145–167; that stretch reads TMADQSSAELSSNSEQGQSVPLN. Positions 145 to 235 are disordered; the sequence is TMADQSSAEL…PTAATTPDGA (91 aa). Low complexity predominate over residues 168-207; it reads TSTTTDPATTSTPPASVDTTATNTQTPAVTAPAPAVDPQQ. Polar residues predominate over residues 208–218; it reads NAVVSPSQANV. Positions 219–235 are enriched in low complexity; sequence DTAATPAPTAATTPDGA.

The protein belongs to the RodZ family.

It localises to the cell inner membrane. In terms of biological role, cytoskeletal protein that is involved in cell-shape control through regulation of the length of the long axis. The chain is Cytoskeleton protein RodZ from Shigella boydii serotype 4 (strain Sb227).